The primary structure comprises 354 residues: Sphingosine-1-phosphate phosphatase 2 (354 aa).

Helical transmembrane passes span 43–63 (YLFR…FLPF), 76–96 (LVVI…ILKW), 115–135 (YGMP…LLIS), and 140–160 (YQYP…LVCL). The segment at 91 to 99 (KDILKWPRP) is phosphatase sequence motif I. The segment at 118 to 121 (PSTH) is phosphatase sequence motif II. His-121 (proton donor) is an active-site residue. The interval 161–172 (SRLYTGMHTVLD) is phosphatase sequence motif III. Residue His-168 is the Nucleophile of the active site. Transmembrane regions (helical) follow at residues 173–193 (ILGG…AWTL), 202–222 (PLFP…YPVS), 235–255 (IVAA…FQLV), 273–293 (TDML…ILLV), and 334–354 (TSVG…LGLL).

Belongs to the type 2 lipid phosphate phosphatase family. In terms of tissue distribution, highly expressed in pancreatic islets. Expressed in lung, small interstince, colon, kideny and brain.

The protein localises to the endoplasmic reticulum membrane. It carries out the reaction sphinganine 1-phosphate + H2O = sphinganine + phosphate. The enzyme catalyses sphing-4-enine 1-phosphate + H2O = sphing-4-enine + phosphate. The catalysed reaction is (4R)-hydroxysphinganine 1-phosphate + H2O = (4R)-hydroxysphinganine + phosphate. Functionally, has specific phosphohydrolase activity towards sphingoid base 1-phosphates. Has high phosphohydrolase activity against dihydrosphingosine-1-phosphate and sphingosine-1-phosphate (S1P) in vitro. Sphingosine-1-phosphate phosphatase activity is needed for efficient recycling of sphingosine into the sphingolipid synthesis pathway. May play a role in attenuating intracellular sphingosine 1-phosphate (S1P) signaling. May play a role in pro-inflammatory signaling. Plays a role in the regulation of pancreatic islet beta-cell endoplasmic reticulum stress and proliferation. This is Sphingosine-1-phosphate phosphatase 2 from Mus musculus (Mouse).